Here is a 140-residue protein sequence, read N- to C-terminus: Transmembrane protein 234 homolog (140 aa).

The next 4 helical transmembrane spans lie at 14–34, 64–84, 88–108, and 116–136; these read IYAV…NPFI, WQYL…VLTL, ELSL…AITA, and SGWK…ICGL.

It belongs to the TMEM234 family.

It localises to the membrane. The sequence is that of Transmembrane protein 234 homolog from Anopheles gambiae (African malaria mosquito).